The following is a 298-amino-acid chain: MSRPEQQLKKMLKNPQAQYAVYPTAKVERISTTQHMYFIATRPMFEGGRNNVFLGHQVGQPIIFKYVSKKEIPGNEVIVLKALQDTPGVIKLIEYTENAMYHILIIEYIPNSVDLLHYHYFKKLEETEAKKIIFQLILIIQNIYEKGFIHGDIKDENLIIDINQKIIKVIDFGSAVRLDETRPQYNMFGTWEYVCPEFYYYGYYYQLPLTVWTIGMVAVNLFRFRAENFYLNDILKGENYIPENISETGKQFITDCLTINENKRLSFKSLVSHPWFKGLKKEIQPISELGVDYKNVIT.

One can recognise a Protein kinase domain in the interval 38 to 276 (FIATRPMFEG…FKSLVSHPWF (239 aa)). ATP-binding positions include 45-53 (FEGGRNNVF) and K65. The active-site Proton acceptor is D152.

It belongs to the protein kinase superfamily. Ser/Thr protein kinase family.

Its subcellular location is the virion. The protein resides in the host cytoplasm. The catalysed reaction is L-seryl-[protein] + ATP = O-phospho-L-seryl-[protein] + ADP + H(+). It catalyses the reaction L-threonyl-[protein] + ATP = O-phospho-L-threonyl-[protein] + ADP + H(+). Essential for viral replication. It may mediate the virus' progression through DNA replication. The chain is Serine/threonine-protein kinase 1 from Ornithodoros (relapsing fever ticks).